The primary structure comprises 365 residues: UDP-N-acetylglucosamine--N-acetylmuramyl-(pentapeptide) pyrophosphoryl-undecaprenol N-acetylglucosamine transferase (365 aa).

Residues Thr20–Gly22, Asn132, Arg168, Ser196, Ile253, and Gln298 contribute to the UDP-N-acetyl-alpha-D-glucosamine site.

Belongs to the glycosyltransferase 28 family. MurG subfamily.

The protein localises to the cell inner membrane. The enzyme catalyses di-trans,octa-cis-undecaprenyl diphospho-N-acetyl-alpha-D-muramoyl-L-alanyl-D-glutamyl-meso-2,6-diaminopimeloyl-D-alanyl-D-alanine + UDP-N-acetyl-alpha-D-glucosamine = di-trans,octa-cis-undecaprenyl diphospho-[N-acetyl-alpha-D-glucosaminyl-(1-&gt;4)]-N-acetyl-alpha-D-muramoyl-L-alanyl-D-glutamyl-meso-2,6-diaminopimeloyl-D-alanyl-D-alanine + UDP + H(+). The protein operates within cell wall biogenesis; peptidoglycan biosynthesis. Its function is as follows. Cell wall formation. Catalyzes the transfer of a GlcNAc subunit on undecaprenyl-pyrophosphoryl-MurNAc-pentapeptide (lipid intermediate I) to form undecaprenyl-pyrophosphoryl-MurNAc-(pentapeptide)GlcNAc (lipid intermediate II). This Ralstonia nicotianae (strain ATCC BAA-1114 / GMI1000) (Ralstonia solanacearum) protein is UDP-N-acetylglucosamine--N-acetylmuramyl-(pentapeptide) pyrophosphoryl-undecaprenol N-acetylglucosamine transferase.